Here is a 121-residue protein sequence, read N- to C-terminus: HTH-type transcriptional regulator Rv1152 (121 aa).

Positions 15–83 constitute an HTH gntR-type domain; sequence KPLFDQLRTQ…GRFGTFISRF (69 aa). A DNA-binding region (H-T-H motif) is located at residues 43–62; it reads VRDLAGQLGVAANTVARAYR.

Its subcellular location is the cytoplasm. It is found in the secreted. The protein localises to the cell wall. Functionally, transcriptional regulator that modulates resistance to vancomycin and aminoglycosides. Negatively regulates the expression of several genes responsive to vancomycin, resulting in decreased susceptibility of bacteria to vancomycin. Negatively regulates the expression of genes encoding the ribosome binding protein Hsp, the small subunit of sulfate adenylyltransferase CysD, the L-lysine-epsilon aminotransferase LAT and the protease HtpX. Also modulates purine metabolism and aminoglycoside antibiotic resistance. Negatively regulates the expression of purine metabolism-related genes and the accumulation of purine metabolites, which affects aminoglycoside antibiotic resistance. The chain is HTH-type transcriptional regulator Rv1152 from Mycobacterium tuberculosis (strain ATCC 25618 / H37Rv).